Consider the following 267-residue polypeptide: Endonuclease NucS (267 aa).

This sequence belongs to the NucS endonuclease family.

It localises to the cytoplasm. Its function is as follows. Cleaves both 3' and 5' ssDNA extremities of branched DNA structures. This is Endonuclease NucS from Pyrococcus furiosus (strain ATCC 43587 / DSM 3638 / JCM 8422 / Vc1).